A 251-amino-acid chain; its full sequence is Chlorophyll a-b binding protein 4, chloroplastic (251 aa).

Residue Ser35 is modified to Phosphoserine. Trp57 contributes to the chlorophyll b binding site. The chlorophyll a site is built by Phe77 and Glu96. Arg101 provides a ligand contact to chlorophyll b. Transmembrane regions (helical) follow at residues 102-122 (WAML…IGII) and 135-155 (YFAS…YVEI). Chlorophyll b-binding residues include Ser138, Val144, Glu154, and Arg157. The chlorophyll a site is built by Lys204, Glu205, Asn208, Arg210, Gln222, and His237.

It belongs to the light-harvesting chlorophyll a/b-binding (LHC) protein family. As to quaternary structure, the LHC complex consists of chlorophyll a-b binding proteins. Red-emitting heterodimer with LHCA1. The cofactor is Binds at least 14 chlorophylls (8 Chl-a and 6 Chl-b) and carotenoids such as lutein and neoxanthin.. Post-translationally, photoregulated by reversible phosphorylation of its threonine residues.

The protein resides in the plastid. Its subcellular location is the chloroplast thylakoid membrane. Its function is as follows. The light-harvesting complex (LHC) functions as a light receptor, it captures and delivers excitation energy to photosystems with which it is closely associated. This Arabidopsis thaliana (Mouse-ear cress) protein is Chlorophyll a-b binding protein 4, chloroplastic.